A 161-amino-acid polypeptide reads, in one-letter code: Alpha-crystallin A chain (161 aa).

Met1 carries the N-acetylmethionine modification. The tract at residues 1 to 53 (MDVTIQHPWFKRALGPFYHNRLFDQFFGEGLFEYDLLPFQSLFRTVLDSGISE) is required for complex formation with BFSP1 and BFSP2. A deamidated glutamine; partial mark is found at Gln6 and Gln40. The 110-residue stretch at 41–150 (SLFRTVLDSG…SHSERAIPVS (110 aa)) folds into the sHSP domain. Lys87 bears the N6-acetyllysine mark. His88 lines the Zn(2+) pocket. Asn89 bears the Deamidated asparagine; partial mark. 2 residues coordinate Zn(2+): Glu90 and His95. Position 110 is a phosphoserine (Ser110). Asn111 carries the deamidated asparagine; partial modification. Cys119 and Cys130 are oxidised to a cystine. Gln135 is subject to Deamidated glutamine; partial. The interval 135–161 (QSGMDASHSERAIPVSREEKASSAPNS) is disordered. Residues 141 to 155 (SHSERAIPVSREEKA) are compositionally biased toward basic and acidic residues. His142 serves as a coordination point for Zn(2+). Residue Ser150 is glycosylated (O-linked (GlcNAc) serine).

The protein belongs to the small heat shock protein (HSP20) family. Heteromer composed of three CRYAA and one CRYAB subunits. Inter-subunit bridging via zinc ions enhances stability, which is crucial as there is no protein turn over in the lens. Can also form homodimers and homotetramers (dimers of dimers) which serve as the building blocks of homooligomers. Within homooligomers, the zinc-binding motif is created from residues of 3 different molecules. His-88 and Glu-90 from one molecule are ligands of the zinc ion, and His-95 and His-142 residues from additional molecules complete the site with tetrahedral coordination geometry. Part of a complex required for lens intermediate filament formation composed of BFSP1, BFSP2 and CRYAA. Post-translationally, undergoes age-dependent proteolytical cleavage at the C-terminus.

The protein resides in the cytoplasm. Its subcellular location is the nucleus. In terms of biological role, contributes to the transparency and refractive index of the lens. In its oxidized form (absence of intramolecular disulfide bond), acts as a chaperone, preventing aggregation of various proteins under a wide range of stress conditions. Required for the correct formation of lens intermediate filaments as part of a complex composed of BFSP1, BFSP2 and CRYAA. The polypeptide is Alpha-crystallin A chain (CRYAA) (Trichechus inunguis (Amazon manatee)).